Consider the following 201-residue polypeptide: uncharacterized protein (201 aa).

The 108-residue stretch at 15–122 (KNQIQFSTFN…EVLPQIRKTG (108 aa)) folds into the Bro-N domain.

This is an uncharacterized protein from Haemophilus influenzae (strain ATCC 51907 / DSM 11121 / KW20 / Rd).